The chain runs to 71 residues: DNA-directed RNA polymerase subunit epsilon (71 aa).

Belongs to the RNA polymerase subunit epsilon family. As to quaternary structure, RNAP is composed of a core of 2 alpha, a beta and a beta' subunit. The core is associated with a delta subunit, and at least one of epsilon or omega. When a sigma factor is associated with the core the holoenzyme is formed, which can initiate transcription.

It carries out the reaction RNA(n) + a ribonucleoside 5'-triphosphate = RNA(n+1) + diphosphate. A non-essential component of RNA polymerase (RNAP). In Staphylococcus carnosus (strain TM300), this protein is DNA-directed RNA polymerase subunit epsilon.